Consider the following 90-residue polypeptide: Probable dynein light chain 2, cytoplasmic (90 aa).

The protein belongs to the dynein light chain family.

It is found in the cytoplasm. It localises to the cytoskeleton. Acts as one of several non-catalytic accessory components of a dynein complex. In Caenorhabditis elegans, this protein is Probable dynein light chain 2, cytoplasmic (dlc-2).